A 148-amino-acid chain; its full sequence is Small ribosomal subunit protein bS6 (148 aa).

Residues 96-148 (HEEGQSAMLTRRDDRRERDGDDRPRRREGGFDRGDRGDRSPRRPRDNEAGEGA) are disordered.

Belongs to the bacterial ribosomal protein bS6 family.

Binds together with bS18 to 16S ribosomal RNA. The protein is Small ribosomal subunit protein bS6 of Brucella suis (strain ATCC 23445 / NCTC 10510).